The primary structure comprises 166 residues: Endoribonuclease YbeY (166 aa).

Residues histidine 111, histidine 115, and histidine 121 each contribute to the Zn(2+) site. A disordered region spans residues 141–166; the sequence is LGYPDPYAEDESADHPHSDTPSKDHE. Basic and acidic residues predominate over residues 153–166; the sequence is ADHPHSDTPSKDHE.

Belongs to the endoribonuclease YbeY family. Zn(2+) is required as a cofactor.

Its subcellular location is the cytoplasm. Single strand-specific metallo-endoribonuclease involved in late-stage 70S ribosome quality control and in maturation of the 3' terminus of the 16S rRNA. The polypeptide is Endoribonuclease YbeY (Pseudomonas savastanoi pv. phaseolicola (strain 1448A / Race 6) (Pseudomonas syringae pv. phaseolicola (strain 1448A / Race 6))).